The chain runs to 331 residues: MQSFEKEFLKPRSINIEKISEIHSKITLEPLERGFGHTLGNALRRILLSSMPGCAITEVEIEGVLHEYGTKEGVREDVLEILLNLKTLAINMYVKDSIVLTLKKTGIGPVIASDIEYDSSIISIVNPNHIICCITDQDTSIIMRIKVQRGRGYVPAFSRFSSDDQHDLPIGRLLLDACYSPVERISYTVEAARVEKRTDLDKLIIDMETNGTIDPEEAIRRAATILSDQLSSFIDLKDVHQPEVKEEKPEFDPSLLNLVDDLELTVRSANCLKAESIHYIGDLVQKTEVELLKTPNLGKKSLTEIKDVLASRGLSLGMRLDNWPPKHLSEQ.

Residues 1–237 (MQSFEKEFLK…DQLSSFIDLK (237 aa)) are alpha N-terminal domain (alpha-NTD). Residues 251–331 (FDPSLLNLVD…NWPPKHLSEQ (81 aa)) form an alpha C-terminal domain (alpha-CTD) region.

It belongs to the RNA polymerase alpha chain family. In terms of assembly, homodimer. The RNAP catalytic core consists of 2 alpha, 1 beta, 1 beta' and 1 omega subunit. When a sigma factor is associated with the core the holoenzyme is formed, which can initiate transcription.

The catalysed reaction is RNA(n) + a ribonucleoside 5'-triphosphate = RNA(n+1) + diphosphate. DNA-dependent RNA polymerase catalyzes the transcription of DNA into RNA using the four ribonucleoside triphosphates as substrates. This chain is DNA-directed RNA polymerase subunit alpha, found in Blochmanniella floridana.